We begin with the raw amino-acid sequence, 479 residues long: Probable periplasmic serine endoprotease DegP-like (479 aa).

A signal peptide spans 1–27 (MSMPSLKKYAAALFAVFLMGQSVAAHA). Catalysis depends on charge relay system residues His-118, Asp-148, and Ser-221. Substrate is bound by residues 219 to 221 (GNS) and 276 to 280 (LGVVI). PDZ domains follow at residues 265 to 356 (LKAS…VREG) and 362 to 468 (KVAV…LRQG). The disordered stretch occupies residues 368-390 (MPADDGDEATNDAAPSAERSSNR).

It belongs to the peptidase S1C family.

The protein resides in the periplasm. The catalysed reaction is Acts on substrates that are at least partially unfolded. The cleavage site P1 residue is normally between a pair of hydrophobic residues, such as Val-|-Val.. Functionally, might be efficient in the degradation of transiently denatured and unfolded proteins which accumulate in the periplasm following stress conditions. In Pseudomonas fulva (strain 12-X), this protein is Probable periplasmic serine endoprotease DegP-like.